Reading from the N-terminus, the 250-residue chain is Thermostable monoacylglycerol lipase (250 aa).

Residue F29 participates in substrate binding. Residue S97 is the Nucleophile of the active site. Substrate is bound at residue M98. Residues D196 and H226 each act as charge relay system in the active site.

It belongs to the lipase/esterase LIP3/BchO family. As to quaternary structure, monomer.

The enzyme catalyses Hydrolyzes glycerol monoesters of long-chain fatty acids.. Its activity is regulated as follows. Not inhibited by cholate, but slightly inhibited by triton X-100 and deoxycholate. Completely inhibited by PMSF (phenylmethylsulfonyl fluoride) at a concentration of 200 uM. Hydrolyzes monoacylglycerols, with the highest activity occurring with 1-monolauroylglycerol. In Bacillus sp. (strain H-257), this protein is Thermostable monoacylglycerol lipase.